A 431-amino-acid chain; its full sequence is Adenylosuccinate synthetase (431 aa).

Residues 13–19 (GDEGKGK) and 41–43 (GHT) contribute to the GTP site. Residue aspartate 14 is the Proton acceptor of the active site. Aspartate 14 and glycine 41 together coordinate Mg(2+). IMP contacts are provided by residues 14 to 17 (DEGK), 39 to 42 (NAGH), threonine 130, arginine 144, glutamine 225, threonine 240, and arginine 306. The active-site Proton donor is the histidine 42. Residue 302–308 (ATTGRQR) participates in substrate binding. Residues arginine 308, 334-336 (KLD), and 416-418 (STG) each bind GTP.

This sequence belongs to the adenylosuccinate synthetase family. In terms of assembly, homodimer. It depends on Mg(2+) as a cofactor.

The protein resides in the cytoplasm. It carries out the reaction IMP + L-aspartate + GTP = N(6)-(1,2-dicarboxyethyl)-AMP + GDP + phosphate + 2 H(+). The protein operates within purine metabolism; AMP biosynthesis via de novo pathway; AMP from IMP: step 1/2. Functionally, plays an important role in the de novo pathway of purine nucleotide biosynthesis. Catalyzes the first committed step in the biosynthesis of AMP from IMP. The sequence is that of Adenylosuccinate synthetase from Halorhodospira halophila (strain DSM 244 / SL1) (Ectothiorhodospira halophila (strain DSM 244 / SL1)).